The sequence spans 494 residues: Probable cytochrome P450 518A1 (494 aa).

A helical membrane pass occupies residues 1–21 (MSILIILIISIIFYLIFDFLY). Cysteine 438 is a heme binding site.

The protein belongs to the cytochrome P450 family. Heme serves as cofactor.

The protein localises to the membrane. The chain is Probable cytochrome P450 518A1 (cyp518A1) from Dictyostelium discoideum (Social amoeba).